The sequence spans 294 residues: 33 kDa chaperonin (294 aa).

2 cysteine pairs are disulfide-bonded: C239–C241 and C272–C275.

It belongs to the HSP33 family. In terms of processing, under oxidizing conditions two disulfide bonds are formed involving the reactive cysteines. Under reducing conditions zinc is bound to the reactive cysteines and the protein is inactive.

It is found in the cytoplasm. In terms of biological role, redox regulated molecular chaperone. Protects both thermally unfolding and oxidatively damaged proteins from irreversible aggregation. Plays an important role in the bacterial defense system toward oxidative stress. The protein is 33 kDa chaperonin of Listeria innocua serovar 6a (strain ATCC BAA-680 / CLIP 11262).